Consider the following 536-residue polypeptide: Inactive phospholipase D5 (536 aa).

Topologically, residues 1–68 (MEIRQHEWLS…DKLEHSQQKC (68 aa)) are cytoplasmic. A helical transmembrane segment spans residues 69-89 (IVIFALVCCFAVLVALIFSAV). Residues 90 to 536 (DIMGEDEDGL…NATGREPLSV (447 aa)) lie on the Extracellular side of the membrane. A glycan (N-linked (GlcNAc...) asparagine) is linked at asparagine 121. In terms of domain architecture, PLD phosphodiesterase 1 spans 215–242 (NKGRLQSSFWIVDKQHVYIGSAGLDWRS). N-linked (GlcNAc...) asparagine glycosylation is present at asparagine 302. The region spanning 434-460 (FPKLNRNKYMVTDGAAYIGNFDWVGND) is the PLD phosphodiesterase 2 domain. The disordered stretch occupies residues 503 to 536 (QPTKQPNCSSLSKLKSPSKQPAMANATGREPLSV). A compositionally biased stretch (low complexity) spans 511–521 (SSLSKLKSPSK).

The protein belongs to the phospholipase D family.

It is found in the membrane. This Mus musculus (Mouse) protein is Inactive phospholipase D5 (Pld5).